The chain runs to 200 residues: Probable GTP-binding protein EngB (200 aa).

The EngB-type G domain maps to Ser25–Trp199. GTP contacts are provided by residues Gly33 to Ser40, Gly60 to Leu64, Asp78 to Gly81, Thr145 to Asp148, and Phe178 to Ser180. 2 residues coordinate Mg(2+): Ser40 and Thr62.

This sequence belongs to the TRAFAC class TrmE-Era-EngA-EngB-Septin-like GTPase superfamily. EngB GTPase family. Mg(2+) serves as cofactor.

Its function is as follows. Necessary for normal cell division and for the maintenance of normal septation. This is Probable GTP-binding protein EngB from Legionella pneumophila (strain Paris).